The following is a 430-amino-acid chain: Pre-B-cell leukemia transcription factor 1 (430 aa).

Residues 1-40 (MDEQPRLMHSHAGVGMAGHPGLSQHLQDGAGGTEGEGGRK) form a disordered region. The region spanning 38–232 (GRKQDIGDIL…VMILRSRFLD (195 aa)) is the PBC domain. The interval 45–124 (DILQQIMTIT…EGVAGPEKGG (80 aa)) is PBC-A. The tract at residues 127-232 (AAAAAAAAAS…VMILRSRFLD (106 aa)) is PBC-B. A DNA-binding region (homeobox; TALE-type) is located at residues 233–295 (ARRKRRNFNK…NKRIRYKKNI (63 aa)). Disordered stretches follow at residues 317–338 (SAHG…SSSF) and 395–430 (SPQG…DTSN). Residues 323–338 (ANSPSTPNSAGSSSSF) show a composition bias toward low complexity. Positions 407-418 (DATTPSSVTSPT) are enriched in polar residues.

It belongs to the TALE/PBX homeobox family. Forms a heterodimer with MEIS1 which binds DNA. The PBX1-MEIS1 heterodimer binds a cAMP-responsive sequence in CYP17. It also binds a consensus region in the SOX3 promoter. PBX1 forms heterotrimers with MEIS1 and a number of HOX proteins including HOXA9, HOXD4, HOXD9 and HOXD10. Forms heterodimers with HOXA1, HOXA5, HOXB7 and HOXB8 which bind the 5'-TGATTGAT-3' consensus sequence. Also forms heterodimers with HOXA5, HOXB7, HOXB8, HOXC8 and HOXD4 which bind the 5'-ATCAATCAA-3' consensus sequence. Interacts with PBXIP1. Interacts with TLX1. Interacts with FOXC1. Interacts with MN1. As to quaternary structure, interacts with MEIS2 isoform 4, SP1, SP3 and KLF4. In terms of assembly, part of a PDX1:PBX1b:MEIS2B complex; PBX1b recruits MEIS2B to the complex. In terms of tissue distribution, expressed in the kidney. Expressed in the endothelial cells of the glomeruli and interstitium (at protein level). Expressed in all tissues except in cells of the B and T lineage. Expressed strongly in kidney and brain.

It localises to the nucleus. In terms of biological role, transcription factor which binds the DNA sequence 5'-TGATTGAT-3' as part of a heterodimer with HOX proteins such as HOXA1, HOXA5, HOXB7 and HOXB8. Binds to the DNA sequence 5'-TGATTGAC-3' in complex with a nuclear factor which is not a class I HOX protein. Has also been shown to bind the DNA sequence 5'-ATCAATCAA-3' cooperatively with HOXA5, HOXB7, HOXB8, HOXC8 and HOXD4. Acts as a transcriptional activator of PF4 in complex with MEIS1. Also activates transcription of SOX3 in complex with MEIS1 by binding to the 5'-TGATTGAC-3' consensus sequence. In natural killer cells, binds to the NFIL3 promoter and acts as a transcriptional activator of NFIL3, promoting natural killer cell development. Plays a role in the cAMP-dependent regulation of CYP17A1 gene expression via its cAMP-regulatory sequence (CRS1). Probably in complex with MEIS2, involved in transcriptional regulation by KLF4. Acts as a transcriptional activator of NKX2-5 and a transcriptional repressor of CDKN2B. Together with NKX2-5, required for spleen development through a mechanism that involves CDKN2B repression. Its function is as follows. As part of a PDX1:PBX1b:MEIS2B complex in pancreatic acinar cells, is involved in the transcriptional activation of the ELA1 enhancer; the complex binds to the enhancer B element and cooperates with the transcription factor 1 complex (PTF1) bound to the enhancer A element. The sequence is that of Pre-B-cell leukemia transcription factor 1 (PBX1) from Homo sapiens (Human).